The following is a 294-amino-acid chain: UDP-3-O-acyl-N-acetylglucosamine deacetylase (294 aa).

3 residues coordinate Zn(2+): His-75, His-232, and Asp-236. His-259 functions as the Proton donor in the catalytic mechanism.

It belongs to the LpxC family. Zn(2+) serves as cofactor.

It catalyses the reaction a UDP-3-O-[(3R)-3-hydroxyacyl]-N-acetyl-alpha-D-glucosamine + H2O = a UDP-3-O-[(3R)-3-hydroxyacyl]-alpha-D-glucosamine + acetate. It functions in the pathway glycolipid biosynthesis; lipid IV(A) biosynthesis; lipid IV(A) from (3R)-3-hydroxytetradecanoyl-[acyl-carrier-protein] and UDP-N-acetyl-alpha-D-glucosamine: step 2/6. Its function is as follows. Catalyzes the hydrolysis of UDP-3-O-myristoyl-N-acetylglucosamine to form UDP-3-O-myristoylglucosamine and acetate, the committed step in lipid A biosynthesis. The sequence is that of UDP-3-O-acyl-N-acetylglucosamine deacetylase from Campylobacter curvus (strain 525.92).